The following is a 252-amino-acid chain: F-box/SPRY domain-containing protein 1 (252 aa).

In terms of domain architecture, F-box spans 1-48; it reads MVDPLCNYNVLEAIFSYLELNDLYRCSQVCKSWYHFLNDENSDVWRWH. Positions 58–250 constitute a B30.2/SPRY domain; sequence VKSDLLASVS…VSMVYLGTPL (193 aa).

The protein belongs to the FBXO45/Fsn family. As to quaternary structure, component of an E3 ubiquitin ligase complex composed of hiw and Fsn.

The protein resides in the synapse. It participates in protein modification; protein ubiquitination. Functionally, required in the presynaptic motoneuron to down-regulate the levels of wnd and restrain synaptic terminal growth at the neuromuscular junction (NMJ). In Drosophila virilis (Fruit fly), this protein is F-box/SPRY domain-containing protein 1.